Here is a 239-residue protein sequence, read N- to C-terminus: MGQCLSGNQVAGVANNGGEQPSGSNILRLPKLYTPNPLLTKEEVEVRRNEFWETCWAYGGSKEIWDVLHKVVTLLYEGNAEAATEMALAADLTIPENDISKGVYDSKGTFYEIPKIVARIPRAFAERKDSLDDEDDNMISSNDPTKSPEEHDTTTKSIASLKDAELDSSLETVLIRYSKDDKDYSIQINPNLPFSHAKSQLEEVGLENVQRFFFLGRVLQFKKSLSQQGWTSGMIIQAM.

A disordered region spans residues 129 to 155; that stretch reads DSLDDEDDNMISSNDPTKSPEEHDTTT. Ser-160 is subject to Phosphoserine.

This is an uncharacterized protein from Schizosaccharomyces pombe (strain 972 / ATCC 24843) (Fission yeast).